Here is a 363-residue protein sequence, read N- to C-terminus: G-protein coupled receptor 6 (363 aa).

At Met1 to Pro75 the chain is on the extracellular side. Residues Asn2 and Asn9 are each glycosylated (N-linked (GlcNAc...) asparagine). Positions Gly29 to Gly48 are disordered. N-linked (GlcNAc...) asparagine glycosylation occurs at Asn52. The helical transmembrane segment at Trp76–Val95 threads the bilayer. The Cytoplasmic segment spans residues Ala96–Pro107. The helical transmembrane segment at Met108 to Val131 threads the bilayer. Residues Phe132–Leu143 are Extracellular-facing. Residues Leu144–Val165 traverse the membrane as a helical segment. Residues Asp166–Val186 are Cytoplasmic-facing. A helical membrane pass occupies residues His187–Leu206. At Gly207–Leu231 the chain is on the extracellular side. The chain crosses the membrane as a helical span at residues Ser232–Cys250. Topologically, residues Gln251–Gly278 are cytoplasmic. The helical transmembrane segment at Val279–Gln305 threads the bilayer. The Extracellular segment spans residues Glu306–Ile310. The helical transmembrane segment at Tyr311–Phe332 threads the bilayer. The Cytoplasmic portion of the chain corresponds to Arg333 to Val363. The S-palmitoyl cysteine moiety is linked to residue Cys346. 3 positions are modified to phosphoserine: Ser357, Ser359, and Ser361.

Belongs to the G-protein coupled receptor 1 family. As to expression, mainly expressed in the brain. Selectively expressed in striatopallidal neurons in the striatum.

Its subcellular location is the cell membrane. In terms of biological role, orphan receptor with constitutive G(s) signaling activity that activate cyclic AMP. Promotes neurite outgrowth and blocks myelin inhibition in neurons. The protein is G-protein coupled receptor 6 (Gpr6) of Mus musculus (Mouse).